Reading from the N-terminus, the 924-residue chain is Type II inositol 3,4-bisphosphate 4-phosphatase (924 aa).

Over residues 1–13 (MEIKEEGASEEGQ) the composition is skewed to basic and acidic residues. Disordered regions lie at residues 1–25 (MEIKEEGASEEGQHFLPTAQASDPG), 481–516 (ILKKPPSPKSSTEESSPQDQPPLMRGQDSIPHHSDY), and 546–569 (DGGSEGSGGNNDGEKEPSLADAIP). The 143-residue stretch at 23-165 (DPGDCQFTSI…LKSKEQLLVL (143 aa)) folds into the C2 domain.

The protein belongs to the inositol 3,4-bisphosphate 4-phosphatase family.

It carries out the reaction a 1,2-diacyl-sn-glycero-3-phospho-(1D-myo-inositol-3,4-bisphosphate) + H2O = a 1,2-diacyl-sn-glycero-3-phospho-(1D-myo-inositol-3-phosphate) + phosphate. It catalyses the reaction 1D-myo-inositol 1,3,4-trisphosphate + H2O = 1D-myo-inositol 1,3-bisphosphate + phosphate. The enzyme catalyses 1D-myo-inositol 3,4-bisphosphate + H2O = 1D-myo-inositol 3-phosphate + phosphate. It functions in the pathway signal transduction; phosphatidylinositol signaling pathway. Strongly inhibited by inositol hexakisphosphate. In terms of biological role, catalyzes the hydrolysis of the 4-position phosphate of phosphatidylinositol 3,4-bisphosphate, inositol 1,3,4-trisphosphate and inositol 3,4-bisphosphate. Plays a role in the late stages of macropinocytosis by dephosphorylating phosphatidylinositol 3,4-bisphosphate in membrane ruffles. Antagonizes the PI3K-AKT/PKB signaling pathway by dephosphorylating phosphoinositides and thereby modulating cell cycle progression and cell survival. This chain is Type II inositol 3,4-bisphosphate 4-phosphatase (INPP4B), found in Pongo abelii (Sumatran orangutan).